Here is a 127-residue protein sequence, read N- to C-terminus: MSITKEQVVEFIGNMTVLELSEFIKELEEKFGVSAAAPMAAMAVAAPAGDAAPAEEEKTEFDIILKSAGANKIGVIKVVRALTGLGLKEAKDKVDGAPSTLKEAASKEEAEEAKKQLVEAGAEVEIK.

The segment at 94–114 (VDGAPSTLKEAASKEEAEEAK) is disordered. Over residues 104–114 (AASKEEAEEAK) the composition is skewed to basic and acidic residues.

Belongs to the bacterial ribosomal protein bL12 family. In terms of assembly, homodimer. Part of the ribosomal stalk of the 50S ribosomal subunit. Forms a multimeric L10(L12)X complex, where L10 forms an elongated spine to which 2 to 4 L12 dimers bind in a sequential fashion. Binds GTP-bound translation factors.

In terms of biological role, forms part of the ribosomal stalk which helps the ribosome interact with GTP-bound translation factors. Is thus essential for accurate translation. This chain is Large ribosomal subunit protein bL12, found in Nitratidesulfovibrio vulgaris (strain ATCC 29579 / DSM 644 / CCUG 34227 / NCIMB 8303 / VKM B-1760 / Hildenborough) (Desulfovibrio vulgaris).